Reading from the N-terminus, the 477-residue chain is Glycogen synthase (477 aa).

K15 serves as a coordination point for ADP-alpha-D-glucose.

It belongs to the glycosyltransferase 1 family. Bacterial/plant glycogen synthase subfamily.

The catalysed reaction is [(1-&gt;4)-alpha-D-glucosyl](n) + ADP-alpha-D-glucose = [(1-&gt;4)-alpha-D-glucosyl](n+1) + ADP + H(+). It participates in glycan biosynthesis; glycogen biosynthesis. Functionally, synthesizes alpha-1,4-glucan chains using ADP-glucose. The protein is Glycogen synthase of Streptococcus pneumoniae (strain ATCC 700669 / Spain 23F-1).